The chain runs to 256 residues: Pyrroloquinoline-quinone synthase (256 aa).

It belongs to the PqqC family.

It carries out the reaction 6-(2-amino-2-carboxyethyl)-7,8-dioxo-1,2,3,4,7,8-hexahydroquinoline-2,4-dicarboxylate + 3 O2 = pyrroloquinoline quinone + 2 H2O2 + 2 H2O + H(+). Its pathway is cofactor biosynthesis; pyrroloquinoline quinone biosynthesis. In terms of biological role, ring cyclization and eight-electron oxidation of 3a-(2-amino-2-carboxyethyl)-4,5-dioxo-4,5,6,7,8,9-hexahydroquinoline-7,9-dicarboxylic-acid to PQQ. This chain is Pyrroloquinoline-quinone synthase, found in Rhizobium meliloti (strain 1021) (Ensifer meliloti).